Reading from the N-terminus, the 397-residue chain is Zinc finger CCCH domain-containing protein 33 (397 aa).

5 consecutive C3H1-type zinc fingers follow at residues 40 to 68, 85 to 113, 131 to 159, 274 to 302, and 320 to 348; these read RPGE…HPRD, RIGQ…HPRN, RSNE…HPQP, RPGQ…HPRD, and RPGE…HPMR. Residues 361–397 form a disordered region; sequence EVVETSTGKSRRLSVSETRQAATTSSGKDTTIDNTQQ. A compositionally biased stretch (polar residues) spans 364–397; sequence ETSTGKSRRLSVSETRQAATTSSGKDTTIDNTQQ.

It localises to the nucleus. The polypeptide is Zinc finger CCCH domain-containing protein 33 (ZFN1) (Arabidopsis thaliana (Mouse-ear cress)).